We begin with the raw amino-acid sequence, 259 residues long: tRNA pseudouridine synthase A (259 aa).

The active-site Nucleophile is the D52. A substrate-binding site is contributed by Y111.

This sequence belongs to the tRNA pseudouridine synthase TruA family. Homodimer.

The catalysed reaction is uridine(38/39/40) in tRNA = pseudouridine(38/39/40) in tRNA. In terms of biological role, formation of pseudouridine at positions 38, 39 and 40 in the anticodon stem and loop of transfer RNAs. In Ruegeria sp. (strain TM1040) (Silicibacter sp.), this protein is tRNA pseudouridine synthase A.